Reading from the N-terminus, the 294-residue chain is uncharacterized protein (294 aa).

A run of 3 helical transmembrane segments spans residues 21–41, 51–71, and 77–97; these read AIVATNFSWLFITFFVMTFTF, PIIWTLYFFLCLIAFLLLWAA, and ILFSFAFGDVYSFFMAGVFLF. The disordered stretch occupies residues 156–176; the sequence is HPVPFPAEPGSPDPVSPPPPI. The stretch at 184 to 215 forms a coiled coil; sequence ERAESLHAGNIELAEDLQRIQEMERNLENERS. Basic and acidic residues predominate over residues 265 to 277; the sequence is QQENESRLEERRF. Positions 265 to 294 are disordered; sequence QQENESRLEERRFQSHSTNSLFEADSSRDN.

Its subcellular location is the mitochondrion membrane. This is an uncharacterized protein from Arabidopsis thaliana (Mouse-ear cress).